Consider the following 263-residue polypeptide: Shikimate dehydrogenase (NADP(+)) (263 aa).

Residues 21–23 (TLS) and T67 contribute to the shikimate site. K71 (proton acceptor) is an active-site residue. E83 lines the NADP(+) pocket. Shikimate contacts are provided by N92 and D103. NADP(+)-binding positions include 126–130 (GAGGA) and L204. Y206 is a shikimate binding site. G227 contacts NADP(+).

This sequence belongs to the shikimate dehydrogenase family. As to quaternary structure, homodimer.

It carries out the reaction shikimate + NADP(+) = 3-dehydroshikimate + NADPH + H(+). It participates in metabolic intermediate biosynthesis; chorismate biosynthesis; chorismate from D-erythrose 4-phosphate and phosphoenolpyruvate: step 4/7. Functionally, involved in the biosynthesis of the chorismate, which leads to the biosynthesis of aromatic amino acids. Catalyzes the reversible NADPH linked reduction of 3-dehydroshikimate (DHSA) to yield shikimate (SA). The protein is Shikimate dehydrogenase (NADP(+)) of Sulfolobus acidocaldarius (strain ATCC 33909 / DSM 639 / JCM 8929 / NBRC 15157 / NCIMB 11770).